The chain runs to 184 residues: Thymidine kinase (184 aa).

ATP is bound by residues 9–16 and 82–85; these read AAMNSGKS and DEAQ. Residue Glu83 is the Proton acceptor of the active site. Zn(2+)-binding residues include Cys140, Cys142, Cys177, and Cys180.

This sequence belongs to the thymidine kinase family. In terms of assembly, homotetramer.

Its subcellular location is the cytoplasm. It catalyses the reaction thymidine + ATP = dTMP + ADP + H(+). The protein is Thymidine kinase of Chromobacterium violaceum (strain ATCC 12472 / DSM 30191 / JCM 1249 / CCUG 213 / NBRC 12614 / NCIMB 9131 / NCTC 9757 / MK).